The primary structure comprises 319 residues: D-alanine--D-alanine ligase (319 aa).

Residues 120–315 form the ATP-grasp domain; sequence KRVLAQAGVP…YPELLRRLVE (196 aa). 147-198 is an ATP binding site; the sequence is DPPFFVKPANTGSSVGISRVERFQDLEAALALAFRYDEKAVVEKALSPVREL. 3 residues coordinate Mg(2+): Asp-270, Glu-282, and Asn-284.

Belongs to the D-alanine--D-alanine ligase family. It depends on Mg(2+) as a cofactor. Requires Mn(2+) as cofactor.

It localises to the cytoplasm. It catalyses the reaction 2 D-alanine + ATP = D-alanyl-D-alanine + ADP + phosphate + H(+). The protein operates within cell wall biogenesis; peptidoglycan biosynthesis. In terms of biological role, cell wall formation. The sequence is that of D-alanine--D-alanine ligase from Thermus thermophilus (strain ATCC 27634 / DSM 579 / HB8).